The sequence spans 556 residues: 2-succinyl-5-enolpyruvyl-6-hydroxy-3-cyclohexene-1-carboxylate synthase (556 aa).

The protein belongs to the TPP enzyme family. MenD subfamily. As to quaternary structure, homodimer. It depends on Mg(2+) as a cofactor. Requires Mn(2+) as cofactor. Thiamine diphosphate serves as cofactor.

The enzyme catalyses isochorismate + 2-oxoglutarate + H(+) = 5-enolpyruvoyl-6-hydroxy-2-succinyl-cyclohex-3-ene-1-carboxylate + CO2. Its pathway is quinol/quinone metabolism; 1,4-dihydroxy-2-naphthoate biosynthesis; 1,4-dihydroxy-2-naphthoate from chorismate: step 2/7. It functions in the pathway quinol/quinone metabolism; menaquinone biosynthesis. Its function is as follows. Catalyzes the thiamine diphosphate-dependent decarboxylation of 2-oxoglutarate and the subsequent addition of the resulting succinic semialdehyde-thiamine pyrophosphate anion to isochorismate to yield 2-succinyl-5-enolpyruvyl-6-hydroxy-3-cyclohexene-1-carboxylate (SEPHCHC). This Klebsiella pneumoniae (strain 342) protein is 2-succinyl-5-enolpyruvyl-6-hydroxy-3-cyclohexene-1-carboxylate synthase.